A 295-amino-acid polypeptide reads, in one-letter code: Acetylglutamate kinase (295 aa).

Residues glycine 64–glycine 65, arginine 86, and asparagine 190 contribute to the substrate site.

It belongs to the acetylglutamate kinase family. ArgB subfamily.

It is found in the cytoplasm. The catalysed reaction is N-acetyl-L-glutamate + ATP = N-acetyl-L-glutamyl 5-phosphate + ADP. It functions in the pathway amino-acid biosynthesis; L-arginine biosynthesis; N(2)-acetyl-L-ornithine from L-glutamate: step 2/4. Its function is as follows. Catalyzes the ATP-dependent phosphorylation of N-acetyl-L-glutamate. The protein is Acetylglutamate kinase of Oleidesulfovibrio alaskensis (strain ATCC BAA-1058 / DSM 17464 / G20) (Desulfovibrio alaskensis).